Consider the following 156-residue polypeptide: Small ribosomal subunit protein uS7 (156 aa).

Belongs to the universal ribosomal protein uS7 family. Part of the 30S ribosomal subunit. Contacts proteins S9 and S11.

In terms of biological role, one of the primary rRNA binding proteins, it binds directly to 16S rRNA where it nucleates assembly of the head domain of the 30S subunit. Is located at the subunit interface close to the decoding center, probably blocks exit of the E-site tRNA. In Oceanobacillus iheyensis (strain DSM 14371 / CIP 107618 / JCM 11309 / KCTC 3954 / HTE831), this protein is Small ribosomal subunit protein uS7.